The primary structure comprises 68 residues: Probable Sec-independent protein translocase protein TatE (68 aa).

The chain crosses the membrane as a helical span at residues 1–21; sequence MGEISITKLLVVAALIILVFG. Residues 43–68 form a disordered region; that stretch reads MNEDDDSAKKTTAEEEAPAQKLSHKE.

This sequence belongs to the TatA/E family. TatE subfamily.

The protein localises to the cell inner membrane. Functionally, part of the twin-arginine translocation (Tat) system that transports large folded proteins containing a characteristic twin-arginine motif in their signal peptide across membranes. TatE shares overlapping functions with TatA. The protein is Probable Sec-independent protein translocase protein TatE of Klebsiella pneumoniae subsp. pneumoniae (strain ATCC 700721 / MGH 78578).